The sequence spans 266 residues: Elongator complex protein 6 (266 aa).

This sequence belongs to the ELP6 family. In terms of assembly, component of the elongator complex which consists of ELP1, ELP2, ELP3, ELP4, ELP5 and ELP6.

The protein localises to the cytoplasm. It is found in the nucleus. The protein operates within tRNA modification; 5-methoxycarbonylmethyl-2-thiouridine-tRNA biosynthesis. Its function is as follows. Component of the elongator complex which is required for multiple tRNA modifications, including mcm5U (5-methoxycarbonylmethyl uridine), mcm5s2U (5-methoxycarbonylmethyl-2-thiouridine), and ncm5U (5-carbamoylmethyl uridine). The elongator complex catalyzes formation of carboxymethyluridine in the wobble base at position 34 in tRNAs. Involved in cell migration. In Homo sapiens (Human), this protein is Elongator complex protein 6.